Consider the following 853-residue polypeptide: MKLFDKNERVLKRYWKRVKKINEINLSNVPFSELILNMEKIKNNITGENIDDYLVDVFAIVREIAKRTIGLRPFDVQLIGGMVLHEGKVAEMKTGEGKTLVATMPIVLNALLKKGVHLVTVNDYLAKRDAMWMGPIYLALGLRVAVINTQNKSYEVVWKNKELFEKAIRENLSVWPEGFAEEFLPDDKKVNTDCFDVELKEITRKEAYECDITYGTNTEFGFDYLRDNLVINLDSRVQRGHFFAIVDEVDSILIDEARTPLVISGPSKTKASDYRRFNQVAKRLKKDVHFTVDEKKKTVVLTDEGIEYVEKLLNIENLYDPEHVNKMYFLLNALKAHHLFKKDVDYIVNNGEVIIVDEFTGRLLPGRRYSGGLHQAIEAKEGVPIKEESLTYATITYQNYFRMYKKLAGMTGTAKTEEEEFKQIYGMEVVVIPTHKPMIRKDRDDLIYRTEEEKFQAVVSEIKKRHEKGQPVLVGTTSIEKSERLSQMLKKENIPHNVLNAKYHEKEAEIVARAGQRGAVTIATNMAGRGTDIKLGPGVKELGGLLIIGTERHESRRIDNQLRGRAGRQGDPGESIFFLSLEDDIIRIFGGEKLEKIMNLVKIEKGEPIYHPMLTKLIERVQKKVESINFAIRKNLLQMDTVLDAQRKAIYSYREYLLSGNLDEHFYDAMEDFIERILEEFCEKEVCDTQKINESLKILNIDEKLPDTREETKKYLKDIILKRYNKKKEELGEDFSKIGKYIALRVLDENWRQYLEEVEHVKEAVSLRAYGQKDPIIEFKKETFRMFDEMMARIYEQSIVYTLNIRKITDEAEKESKKELEKLYVQHDEFSLVNRKERRTAEKKGKKRLKVKR.

Residues Gln77, 95-99 (GEGKT), and Asp532 each bind ATP.

This sequence belongs to the SecA family. Monomer and homodimer. Part of the essential Sec protein translocation apparatus which comprises SecA, SecYEG and auxiliary proteins SecDF. Other proteins may also be involved.

The protein localises to the cell inner membrane. The protein resides in the cytoplasm. It carries out the reaction ATP + H2O + cellular proteinSide 1 = ADP + phosphate + cellular proteinSide 2.. Part of the Sec protein translocase complex. Interacts with the SecYEG preprotein conducting channel. Has a central role in coupling the hydrolysis of ATP to the transfer of proteins into and across the cell membrane, serving as an ATP-driven molecular motor driving the stepwise translocation of polypeptide chains across the membrane. This is Protein translocase subunit SecA from Thermosipho melanesiensis (strain DSM 12029 / CIP 104789 / BI429).